The following is a 293-amino-acid chain: ATP phosphoribosyltransferase (293 aa).

This sequence belongs to the ATP phosphoribosyltransferase family. Long subfamily. The cofactor is Mg(2+).

The protein resides in the cytoplasm. The catalysed reaction is 1-(5-phospho-beta-D-ribosyl)-ATP + diphosphate = 5-phospho-alpha-D-ribose 1-diphosphate + ATP. It participates in amino-acid biosynthesis; L-histidine biosynthesis; L-histidine from 5-phospho-alpha-D-ribose 1-diphosphate: step 1/9. With respect to regulation, feedback inhibited by histidine. Its function is as follows. Catalyzes the condensation of ATP and 5-phosphoribose 1-diphosphate to form N'-(5'-phosphoribosyl)-ATP (PR-ATP). Has a crucial role in the pathway because the rate of histidine biosynthesis seems to be controlled primarily by regulation of HisG enzymatic activity. The sequence is that of ATP phosphoribosyltransferase from Nitratidesulfovibrio vulgaris (strain DP4) (Desulfovibrio vulgaris).